Reading from the N-terminus, the 338-residue chain is Putative pectinesterase 63 (338 aa).

Residues M1–G24 form the signal peptide. Residues T116 and Q151 each coordinate substrate. D174 (proton donor) is an active-site residue. D195 acts as the Nucleophile in catalysis. Substrate is bound at residue R252.

It belongs to the pectinesterase family.

The protein localises to the secreted. Its subcellular location is the cell wall. The catalysed reaction is [(1-&gt;4)-alpha-D-galacturonosyl methyl ester](n) + n H2O = [(1-&gt;4)-alpha-D-galacturonosyl](n) + n methanol + n H(+). It functions in the pathway glycan metabolism; pectin degradation; 2-dehydro-3-deoxy-D-gluconate from pectin: step 1/5. In terms of biological role, acts in the modification of cell walls via demethylesterification of cell wall pectin. This Arabidopsis thaliana (Mouse-ear cress) protein is Putative pectinesterase 63 (PME63).